Here is a 184-residue protein sequence, read N- to C-terminus: NADH-quinone oxidoreductase subunit B (184 aa).

Cys37, Cys38, Cys103, and Cys132 together coordinate [4Fe-4S] cluster.

This sequence belongs to the complex I 20 kDa subunit family. NDH-1 is composed of 14 different subunits. Subunits NuoB, C, D, E, F, and G constitute the peripheral sector of the complex. Requires [4Fe-4S] cluster as cofactor.

The protein localises to the cell membrane. The enzyme catalyses a quinone + NADH + 5 H(+)(in) = a quinol + NAD(+) + 4 H(+)(out). NDH-1 shuttles electrons from NADH, via FMN and iron-sulfur (Fe-S) centers, to quinones in the respiratory chain. The immediate electron acceptor for the enzyme in this species is believed to be a menaquinone. Couples the redox reaction to proton translocation (for every two electrons transferred, four hydrogen ions are translocated across the cytoplasmic membrane), and thus conserves the redox energy in a proton gradient. This Mycobacterium sp. (strain JLS) protein is NADH-quinone oxidoreductase subunit B.